We begin with the raw amino-acid sequence, 240 residues long: ATP-dependent dethiobiotin synthetase BioD (240 aa).

Position 15–20 (15–20 (EIGKTF)) interacts with ATP. Residue Thr-19 participates in Mg(2+) binding. Lys-40 is a catalytic residue. ATP is bound by residues Asp-57, 118-121 (EGVG), and 178-179 (NR). Residues Asp-57 and Glu-118 each contribute to the Mg(2+) site.

It belongs to the dethiobiotin synthetase family. Homodimer. Mg(2+) serves as cofactor.

It localises to the cytoplasm. It catalyses the reaction (7R,8S)-7,8-diammoniononanoate + CO2 + ATP = (4R,5S)-dethiobiotin + ADP + phosphate + 3 H(+). It functions in the pathway cofactor biosynthesis; biotin biosynthesis; biotin from 7,8-diaminononanoate: step 1/2. Catalyzes a mechanistically unusual reaction, the ATP-dependent insertion of CO2 between the N7 and N8 nitrogen atoms of 7,8-diaminopelargonic acid (DAPA, also called 7,8-diammoniononanoate) to form a ureido ring. The chain is ATP-dependent dethiobiotin synthetase BioD from Burkholderia pseudomallei (strain 1106a).